Consider the following 363-residue polypeptide: Flagellar P-ring protein (363 aa).

The signal sequence occupies residues 1-20 (MKYRLIVALAMLVLSLPSQA).

The protein belongs to the FlgI family. As to quaternary structure, the basal body constitutes a major portion of the flagellar organelle and consists of four rings (L,P,S, and M) mounted on a central rod.

Its subcellular location is the periplasm. The protein localises to the bacterial flagellum basal body. In terms of biological role, assembles around the rod to form the L-ring and probably protects the motor/basal body from shearing forces during rotation. The sequence is that of Flagellar P-ring protein from Shewanella sp. (strain ANA-3).